A 68-amino-acid polypeptide reads, in one-letter code: uncharacterized protein (68 aa).

Residues 1–42 (MHLCQNGHYYKPHRASAEKVPYLKKKKKNSRNEGKAKKKNEK) are disordered.

This is an uncharacterized protein from Saccharomyces cerevisiae (strain ATCC 204508 / S288c) (Baker's yeast).